Reading from the N-terminus, the 403-residue chain is Adenylate cyclase (403 aa).

Over residues 1–16 (MSTEHTNTPRADSPQS) the composition is skewed to polar residues. The segment at 1–37 (MSTEHTNTPRADSPQSAAEAVRGARQHAPAATPAESD) is disordered. The tract at residues 31–60 (ATPAESDPILELAEAMEGPLRIPAHTPEAV) is pyruvate binding. The Guanylate cyclase domain maps to 238–347 (AVGFADLVSY…PTVNMAARLT (110 aa)). Positions 243 and 287 each coordinate Mg(2+).

This sequence belongs to the adenylyl cyclase class-3 family. In terms of assembly, homodimer. Requires Mg(2+) as cofactor.

Its subcellular location is the cytoplasm. It carries out the reaction ATP = 3',5'-cyclic AMP + diphosphate. Pyruvate-stimulated. Plays essential roles in regulation of cellular metabolism by catalyzing the synthesis of a second messenger, cAMP. This chain is Adenylate cyclase (cya), found in Glutamicibacter nicotianae (Arthrobacter nicotianae).